The primary structure comprises 515 residues: Protein FAM98A (515 aa).

2 disordered regions span residues Val-297–Gly-410 and Ser-432–Ser-515. Basic and acidic residues predominate over residues Val-302–Glu-311. The span at Trp-382–Gln-394 shows a compositional bias: gly residues. Positions Arg-444–Ser-456 are enriched in basic and acidic residues. Residues Gly-457–Gly-481 show a composition bias toward gly residues. Residues Tyr-485 to Gln-501 show a composition bias toward low complexity. Over residues Tyr-502–Ser-515 the composition is skewed to polar residues.

Belongs to the FAM98 family. Interacts (via N- and C-terminus) with DDX1. Interacts (via N- and C-terminus) with C14orf166. Interacts with FAM98B. Interacts with PLEKHM1 (via N- and C-terminus).

Functionally, positively stimulates PRMT1-induced protein arginine methylation. Involved in skeletal homeostasis. Positively regulates lysosome peripheral distribution and ruffled border formation in osteoclasts. In Mus musculus (Mouse), this protein is Protein FAM98A.